Here is a 238-residue protein sequence, read N- to C-terminus: Ion-translocating oxidoreductase complex subunit E (238 aa).

A run of 5 helical transmembrane segments spans residues Leu-41–Val-61, Leu-71–Ala-91, Glu-95–Gly-115, Ser-130–Leu-150, and Gly-184–Leu-204.

Belongs to the NqrDE/RnfAE family. The complex is composed of six subunits: RnfA, RnfB, RnfC, RnfD, RnfE and RnfG.

The protein localises to the cell inner membrane. Its function is as follows. Part of a membrane-bound complex that couples electron transfer with translocation of ions across the membrane. This chain is Ion-translocating oxidoreductase complex subunit E, found in Pseudomonas aeruginosa (strain LESB58).